The chain runs to 420 residues: Methionine aminopeptidase 2 (420 aa).

Residues 1-48 (MSDAIAKDAVNTSSEKEPVSATPELKTSGSPDAAVSSGDKKKKKKKKK) are disordered. His-172 provides a ligand contact to substrate. Residues Asp-192, Asp-203, and His-272 each contribute to the a divalent metal cation site. Position 280 (His-280) interacts with substrate. A divalent metal cation is bound by residues Glu-305 and Glu-401.

It belongs to the peptidase M24A family. Methionine aminopeptidase eukaryotic type 2 subfamily. Co(2+) serves as cofactor. Requires Zn(2+) as cofactor. The cofactor is Mn(2+). It depends on Fe(2+) as a cofactor.

The protein localises to the cytoplasm. It carries out the reaction Release of N-terminal amino acids, preferentially methionine, from peptides and arylamides.. Its function is as follows. Cotranslationally removes the N-terminal methionine from nascent proteins. The N-terminal methionine is often cleaved when the second residue in the primary sequence is small and uncharged (Met-Ala-, Cys, Gly, Pro, Ser, Thr, or Val). In Lachancea thermotolerans (strain ATCC 56472 / CBS 6340 / NRRL Y-8284) (Yeast), this protein is Methionine aminopeptidase 2.